Reading from the N-terminus, the 711-residue chain is Amyloid beta precursor protein binding family B member 1 (711 aa).

The residue at position 135 (Ser-135) is a Phosphoserine. Disordered regions lie at residues 140 to 257, 277 to 300, and 321 to 364; these read NTQG…SDLP, GTTQWEPPGRASPSQGNSPQEESQ, and EPSE…QRNA. Over residues 156–174 the composition is skewed to acidic residues; that stretch reads EVEEEDEDEEEEDEEEEDL. The residue at position 205 (Lys-205) is an N6-acetyllysine. Positions 224–235 are enriched in polar residues; it reads SWATLSQGSPSY. In terms of domain architecture, WW spans 254–286; sequence SDLPAGWMRVQDTSGTYYWHIPTGTTQWEPPGR. The segment covering 288-300 has biased composition (polar residues); the sequence is SPSQGNSPQEESQ. 2 consecutive PID domains span residues 365–533 and 538–700; these read NPGI…QVEF and NELV…LWGS. The residue at position 460 (Ser-460) is a Phosphoserine; by PKC. Ser-518 carries the post-translational modification Phosphoserine. At Tyr-548 the chain carries Phosphotyrosine; by ABL1. Ser-611 bears the Phosphoserine; by SGK1 mark. An N6-acetyllysine modification is found at Lys-702.

In terms of assembly, component of a complex, at least composed of APBB1, RASD1/DEXRAS1 and APP. Interacts (via PID domain 2) with APP (with the intracellular domain of the amyloid-beta precursor protein). Interacts (via PID domain 2) with RASD1/DEXRAS1; impairs the transcription activation activity. Interacts (via PID domain 1) with KAT5/TIP60. Interacts (via the WW domain) with the proline-rich region of APBB1IP. Interacts with TSHZ1 and TSHZ2. Interacts (via the WW domain) with histone H2AX (when phosphorylated on 'Tyr-142') and the proline-rich region of ENAH. Interacts with MAPK8. Interacts (via PID domain 1) with TSHZ3 (via homeobox domain). Interacts with SET. Found in a trimeric complex with HDAC1 and TSHZ3; the interaction between HDAC1 and APBB1 is mediated by TSHZ3. Interacts (via WWW domain) with NEK6. Interacts (via WWW domain) with ABL1. Interacts with RNF157. Interacts with ARF6. In terms of processing, polyubiquitination by RNF157 leads to degradation by the proteasome. Phosphorylation at Ser-611 by SGK1 promotes its localization to the nucleus. Phosphorylated following nuclear translocation. Phosphorylation at Tyr-547 by ABL1 enhances transcriptional activation activity and reduces the affinity for RASD1/DEXRAS1. Phosphorylated at Ser-460 by PKC upon insulin activation. Post-translationally, acetylation at Lys-205 and Lys-702 by KAT5 promotes its transcription activator activity. Brain, not in liver, very low in other tissues. The long (neuron-specific) form is expressed only in brain.

Its subcellular location is the cell membrane. The protein localises to the cytoplasm. The protein resides in the nucleus. It is found in the cell projection. It localises to the growth cone. Its subcellular location is the nucleus speckle. Its function is as follows. Transcription coregulator that can have both coactivator and corepressor functions. Adapter protein that forms a transcriptionally active complex with the gamma-secretase-derived amyloid precursor protein (APP) intracellular domain. Plays a central role in the response to DNA damage by translocating to the nucleus and inducing apoptosis. May act by specifically recognizing and binding histone H2AX phosphorylated on 'Tyr-142' (H2AXY142ph) at double-strand breaks (DSBs), recruiting other pro-apoptosis factors such as MAPK8/JNK1. Required for histone H4 acetylation at double-strand breaks (DSBs). Its ability to specifically bind modified histones and chromatin modifying enzymes such as KAT5/TIP60, probably explains its transcription activation activity. Functions in association with TSHZ3, SET and HDAC factors as a transcriptional repressor, that inhibits the expression of CASP4. Associates with chromatin in a region surrounding the CASP4 transcriptional start site(s). Involved in hippocampal neurite branching and neuromuscular junction formation, as a result plays a role in spatial memory functioning. Plays a role in the maintenance of lens transparency. May play a role in muscle cell strength. Acts as a molecular adapter that functions in neurite outgrowth by activating the RAC1-ARF6 axis upon insulin treatment. The sequence is that of Amyloid beta precursor protein binding family B member 1 from Rattus norvegicus (Rat).